We begin with the raw amino-acid sequence, 102 residues long: Hypersensitivity to hygromycin-B protein 1 (102 aa).

Residues 1–17 form the signal peptide; it reads MSLSFLLFSPFLPPCFS. Residues 18 to 38 form a helical membrane-spanning segment; sequence SISICLSVLSTVSFFFAFTIP. Residues 39-69 are Cytoplasmic-facing; sequence HYVLRCGSVDEWHIHSSAEDFRTQRCVCAVK. The chain crosses the membrane as a helical span at residues 70–90; the sequence is LSASLLGCLLACASWSLLLEV. The Extracellular segment spans residues 91 to 102; that stretch reads SRIKWHVGTAYS.

The protein localises to the membrane. Functionally, involved in vacuolar trafficking. The protein is Hypersensitivity to hygromycin-B protein 1 of Saccharomyces cerevisiae (strain ATCC 204508 / S288c) (Baker's yeast).